Reading from the N-terminus, the 148-residue chain is Large ribosomal subunit protein bL9 (148 aa).

Belongs to the bacterial ribosomal protein bL9 family.

Functionally, binds to the 23S rRNA. This chain is Large ribosomal subunit protein bL9, found in Azotobacter vinelandii (strain DJ / ATCC BAA-1303).